The sequence spans 174 residues: Fimbria A protein (174 aa).

The signal sequence occupies residues 1-22 (MKLNKIMLATVLAFGVSSLANA). C41 and C80 are disulfide-bonded.

Belongs to the fimbrial protein family.

The protein localises to the fimbrium. Its function is as follows. Major structural component of mannose-resistant fimbriae of Serratia marcescens. This Serratia marcescens protein is Fimbria A protein (smfA).